We begin with the raw amino-acid sequence, 85 residues long: UPF0335 protein Oant_1161 (85 aa).

The protein belongs to the UPF0335 family.

This Brucella anthropi (strain ATCC 49188 / DSM 6882 / CCUG 24695 / JCM 21032 / LMG 3331 / NBRC 15819 / NCTC 12168 / Alc 37) (Ochrobactrum anthropi) protein is UPF0335 protein Oant_1161.